The primary structure comprises 289 residues: Deoxyuridine 5'-triphosphate nucleotidohydrolase (289 aa).

Substrate contacts are provided by residues 176–178 (RSG) and 283–284 (FG).

It belongs to the dUTPase family. Mg(2+) serves as cofactor.

The catalysed reaction is dUTP + H2O = dUMP + diphosphate + H(+). Functionally, involved in nucleotide metabolism: produces dUMP, the immediate precursor of thymidine nucleotides and decreases the intracellular concentration of dUTP to avoid uracil incorporation into viral DNA. The chain is Deoxyuridine 5'-triphosphate nucleotidohydrolase from Equus caballus (Horse).